A 41-amino-acid chain; its full sequence is Pi-stichotoxin-Hcr5b (41 aa).

Cystine bridges form between Cys-4-Cys-37, Cys-6-Cys-30, and Cys-20-Cys-38.

It belongs to the sea anemone type 3 (BDS) potassium channel toxin family.

The protein resides in the secreted. It localises to the nematocyst. Functionally, remarkably non-selective toxin, with activity on many different ion channels. Weakly and reversibly inhibits rat and human homomeric ASIC1 (isoform ASIC1a) (IC(50)=4.8 uM, and IC(50)=14.6 uM), and ASIC3 (IC(50)=15.9 uM). Molecular modeling interaction with ASIC1a suggests that this peptide hinders the collapse of acidic pockets and stabilizes nonconducting channels state. It activates several potassium channels including Kv1.1/KCNA1, Kv1.2/KCNA2, and drosophila Shaker IR. It moderately to potently inhibits potassium channels including Kv1.3/KCNA3, Kv1.4/KCNA4, Kv1.5/KCNA5, Kv1.6/KCNA6, Kv2.1/KCNB1, Kv4.2/KCND2, Kv7.1/KCNQ1, Kv7.2/Kv7.3 (KCNQ2/KCNQ3), Kv7.4/KCNQ4, hERG/KCNH2, and C.elegans QKT1. On sodium channels, it moderately to potently inhibits Nav1.1/SCN1A, Nav1.2/SCN2A, Nav1.3/SCN3A, Nav1.4/SCN4A, Nav1.5/SCN5A, Nav1.6/SCN8A, Nav1.7/SCN9A, Nav1.8/SCN10A, and B.germanica BgNav. It also moderately to potently inhibits Cav3.1/CACNA1G, Cav3.2/CACNA1H, and Cav3.3/CACNA1I. Significant shifts in the voltage-current relationship are observed on Kv and Nav, depending on the channel isoform, whereas the toxin does not seem to modulate the voltage-sensor domains of Cav channels, acting mainly as a pore blocker. Does not activate nicotinic acetylcholine receptors (nAChR), but potentiates ACh-elicited current of human alpha-7/CHRNA7 nAChR. Is also able to bind T.californica muscle-type nAChRs. In vivo, causes an excitatory effect in mice behavior. Also shows antihyperalgesic and analgesic activity in the acid-induced muscle pain mice model, and weak anti-inflammatory effect in models of acute local inflammation. The sequence is that of Pi-stichotoxin-Hcr5b from Radianthus crispa (Leathery sea anemone).